Consider the following 480-residue polypeptide: Selenium-binding protein 3 (480 aa).

2 residues coordinate selenite: cysteine 12 and cysteine 13.

The protein belongs to the selenium-binding protein family. As to expression, expressed in young seedlings, mostly in roots.

This Arabidopsis thaliana (Mouse-ear cress) protein is Selenium-binding protein 3 (SBP3).